A 328-amino-acid polypeptide reads, in one-letter code: DNA-directed RNA polymerase subunit alpha (328 aa).

Residues 1-234 (MVREKVKVST…DLFIPFLQAE (234 aa)) form an alpha N-terminal domain (alpha-NTD) region. The segment at 268-328 (IALKSIFIDQ…KQIMSILEKK (61 aa)) is alpha C-terminal domain (alpha-CTD).

Belongs to the RNA polymerase alpha chain family. As to quaternary structure, in plastids the minimal PEP RNA polymerase catalytic core is composed of four subunits: alpha, beta, beta', and beta''. When a (nuclear-encoded) sigma factor is associated with the core the holoenzyme is formed, which can initiate transcription.

Its subcellular location is the plastid. The protein localises to the chloroplast. It carries out the reaction RNA(n) + a ribonucleoside 5'-triphosphate = RNA(n+1) + diphosphate. In terms of biological role, DNA-dependent RNA polymerase catalyzes the transcription of DNA into RNA using the four ribonucleoside triphosphates as substrates. This Citrus sinensis (Sweet orange) protein is DNA-directed RNA polymerase subunit alpha.